The sequence spans 263 residues: Cysteine-rich repeat secretory protein 55 (263 aa).

An N-terminal signal peptide occupies residues 1 to 20 (MKTLVVKCFLLLALVCSCRA). 2 consecutive Gnk2-homologous domains span residues 22–126 (DSIW…QENF) and 132–240 (TGAG…FYPF).

Belongs to the cysteine-rich repeat secretory protein family.

The protein localises to the secreted. This chain is Cysteine-rich repeat secretory protein 55 (CRRSP55), found in Arabidopsis thaliana (Mouse-ear cress).